The sequence spans 505 residues: MSWHQAVWNEPLIFEYKGKGRIGFKIPEEEELKKEISINIPEKLRRKEIDLPELSELEVIRHFIRLSQMSFGVDNGMVPLGSCTMKYNPKIEEEAELLTQNLHPLQDDSTVQGILEVLYYMQKWLAEITGMDLCSLQVPAGAAGELAGVLMIKKYHETKGRGNRDEMLVADTAHGTNPASASMENFKVIYIKSNSEGLVDVDILKEIVSERTAGFMLTNPNTLGLFEENILDIAKYIHSVDAKLYYDGANLNGILGVVRPGDMGFDIVHLNLHKTFAVPHGGGGPGAGAICAKGEMVNFLPYPLVEKKDGKYSLSYIPKYSIGKIATFYGNVGNVVRAYTYILGLGAEGISMIGKMSTLATNYLISQLKNVRGLELIAPYRPRKHEVVFSAKTLAKETGVTANDVAKALLDRGFYAPTIYFPPNVEEALMIEPTETEPKEVLDSFAIAIKEIINTAYSNPKEILDTPKNTSVKRLDQVIANHPSSVTPTYRVKRLREEGKIGSLK.

K274 is modified (N6-(pyridoxal phosphate)lysine).

The protein belongs to the GcvP family. C-terminal subunit subfamily. In terms of assembly, the glycine cleavage system is composed of four proteins: P, T, L and H. In this organism, the P 'protein' is a heterodimer of two subunits. Pyridoxal 5'-phosphate is required as a cofactor.

It catalyses the reaction N(6)-[(R)-lipoyl]-L-lysyl-[glycine-cleavage complex H protein] + glycine + H(+) = N(6)-[(R)-S(8)-aminomethyldihydrolipoyl]-L-lysyl-[glycine-cleavage complex H protein] + CO2. In terms of biological role, the glycine cleavage system catalyzes the degradation of glycine. The P protein binds the alpha-amino group of glycine through its pyridoxal phosphate cofactor; CO(2) is released and the remaining methylamine moiety is then transferred to the lipoamide cofactor of the H protein. The sequence is that of Probable glycine dehydrogenase (decarboxylating) subunit 2 from Sulfurisphaera tokodaii (strain DSM 16993 / JCM 10545 / NBRC 100140 / 7) (Sulfolobus tokodaii).